The primary structure comprises 587 residues: 2-succinyl-5-enolpyruvyl-6-hydroxy-3-cyclohexene-1-carboxylate synthase (587 aa).

The protein belongs to the TPP enzyme family. MenD subfamily. As to quaternary structure, homodimer. Mg(2+) is required as a cofactor. Mn(2+) serves as cofactor. The cofactor is thiamine diphosphate.

It catalyses the reaction isochorismate + 2-oxoglutarate + H(+) = 5-enolpyruvoyl-6-hydroxy-2-succinyl-cyclohex-3-ene-1-carboxylate + CO2. Its pathway is quinol/quinone metabolism; 1,4-dihydroxy-2-naphthoate biosynthesis; 1,4-dihydroxy-2-naphthoate from chorismate: step 2/7. It participates in cofactor biosynthesis; phylloquinone biosynthesis. In terms of biological role, catalyzes the thiamine diphosphate-dependent decarboxylation of 2-oxoglutarate and the subsequent addition of the resulting succinic semialdehyde-thiamine pyrophosphate anion to isochorismate to yield 2-succinyl-5-enolpyruvyl-6-hydroxy-3-cyclohexene-1-carboxylate (SEPHCHC). The polypeptide is 2-succinyl-5-enolpyruvyl-6-hydroxy-3-cyclohexene-1-carboxylate synthase (Prochlorococcus marinus (strain AS9601)).